The primary structure comprises 359 residues: Lipopolysaccharide 1,6-galactosyltransferase (359 aa).

Gln-244 and Glu-276 together coordinate UDP.

Belongs to the glycosyltransferase group 1 family. Glycosyltransferase 4 subfamily.

It carries out the reaction alpha-D-Glc-(1-&gt;3)-[L-alpha-D-Hep-(1-&gt;7)]-4-O-PO3(2-)-L-alpha-D-Hep-(1-&gt;3)-4-O-PO3(2-)-L-alpha-D-Hep-(1-&gt;5)-[alpha-Kdo-(2-&gt;4)]-alpha-Kdo-(2-&gt;6)-lipid A + UDP-alpha-D-galactose = alpha-D-Gal-(1-&gt;6)-alpha-D-Glc-(1-&gt;3)-[L-alpha-D-Hep-(1-&gt;7)]-4-O-PO3(2-)-L-alpha-D-Hep-(1-&gt;3)-4-O-PO3(2-)-L-alpha-D-Hep-(1-&gt;5)-[alpha-Kdo-(2-&gt;4)]-alpha-Kdo-(2-&gt;6)-lipid A + UDP + H(+). It participates in bacterial outer membrane biogenesis; LPS core biosynthesis. Galactosyltransferase involved in the biosynthesis of the core oligosaccharide region of lipopolysaccharide (LPS). Catalyzes the addition of galactose from UDP-galactose to the first glucose residue of the LPS outer core. The protein is Lipopolysaccharide 1,6-galactosyltransferase of Salmonella typhimurium (strain LT2 / SGSC1412 / ATCC 700720).